Reading from the N-terminus, the 256-residue chain is 2,3,4,5-tetrahydropyridine-2,6-dicarboxylate N-acetyltransferase (256 aa).

It belongs to the transferase hexapeptide repeat family. DapH subfamily.

It carries out the reaction (S)-2,3,4,5-tetrahydrodipicolinate + acetyl-CoA + H2O = L-2-acetamido-6-oxoheptanedioate + CoA. Its pathway is amino-acid biosynthesis; L-lysine biosynthesis via DAP pathway; LL-2,6-diaminopimelate from (S)-tetrahydrodipicolinate (acetylase route): step 1/3. Catalyzes the transfer of an acetyl group from acetyl-CoA to tetrahydrodipicolinate. The chain is 2,3,4,5-tetrahydropyridine-2,6-dicarboxylate N-acetyltransferase from Lactococcus lactis subsp. cremoris (strain MG1363).